A 212-amino-acid chain; its full sequence is Redox-sensing transcriptional repressor Rex (212 aa).

A DNA-binding region (H-T-H motif) is located at residues 18–57; it reads LYYRFVNTLKSKGIDRVNSKAISEALNIESATIRRDFSYF. 92–97 contributes to the NAD(+) binding site; the sequence is GVGNLG.

It belongs to the transcriptional regulatory Rex family. As to quaternary structure, homodimer.

The protein localises to the cytoplasm. Its function is as follows. Modulates transcription in response to changes in cellular NADH/NAD(+) redox state. The polypeptide is Redox-sensing transcriptional repressor Rex (Staphylococcus haemolyticus (strain JCSC1435)).